The primary structure comprises 386 residues: Succinate--CoA ligase [ADP-forming] subunit beta (386 aa).

The region spanning 9 to 244 is the ATP-grasp domain; the sequence is KELLKQFGVP…LDEEDPAEIE (236 aa). ATP is bound by residues Lys46, 53–55, Glu99, Ala102, and Glu107; that span reads GRG. Residues Asn199 and Asp213 each contribute to the Mg(2+) site. Substrate-binding positions include Asn264 and 321-323; that span reads GIM.

The protein belongs to the succinate/malate CoA ligase beta subunit family. As to quaternary structure, heterotetramer of two alpha and two beta subunits. Requires Mg(2+) as cofactor.

It catalyses the reaction succinate + ATP + CoA = succinyl-CoA + ADP + phosphate. The catalysed reaction is GTP + succinate + CoA = succinyl-CoA + GDP + phosphate. It functions in the pathway carbohydrate metabolism; tricarboxylic acid cycle; succinate from succinyl-CoA (ligase route): step 1/1. Succinyl-CoA synthetase functions in the citric acid cycle (TCA), coupling the hydrolysis of succinyl-CoA to the synthesis of either ATP or GTP and thus represents the only step of substrate-level phosphorylation in the TCA. The beta subunit provides nucleotide specificity of the enzyme and binds the substrate succinate, while the binding sites for coenzyme A and phosphate are found in the alpha subunit. In Bordetella petrii (strain ATCC BAA-461 / DSM 12804 / CCUG 43448), this protein is Succinate--CoA ligase [ADP-forming] subunit beta.